The following is a 374-amino-acid chain: Tuliposide A-converting enzyme b2, amyloplastic (374 aa).

Residues 1 to 68 constitute an amyloplast transit peptide; it reads MSVALFCGPP…TNSSLSPSPT (68 aa). Ser226 acts as the Acyl-ester intermediate in catalysis. Active-site charge relay system residues include Asp316 and His348.

It belongs to the AB hydrolase superfamily. As to quaternary structure, homodimer. Highly expressed in pistil and bulb scales. Lower expression in stem, and barely detected in root, leaf, petal and stamen.

It is found in the plastid. The protein localises to the amyloplast. It catalyses the reaction 6-tuliposide A = tulipalin A + D-glucose. Lactone-forming carboxylesterases, specifically catalyzing intramolecular transesterification, but not hydrolysis. Involved in the biosynthesis of tulipalins, defensive chemicals that show antimicrobial activities against a broad range of strains of bacteria and fungi. Substrates are 6-tuliposide A &gt; 6-tuliposide B. In Tulipa gesneriana (Garden tulip), this protein is Tuliposide A-converting enzyme b2, amyloplastic (TCEA-B2).